A 480-amino-acid polypeptide reads, in one-letter code: Aspartyl/glutamyl-tRNA(Asn/Gln) amidotransferase subunit B (480 aa).

The protein belongs to the GatB/GatE family. GatB subfamily. In terms of assembly, heterotrimer of A, B and C subunits.

It carries out the reaction L-glutamyl-tRNA(Gln) + L-glutamine + ATP + H2O = L-glutaminyl-tRNA(Gln) + L-glutamate + ADP + phosphate + H(+). The catalysed reaction is L-aspartyl-tRNA(Asn) + L-glutamine + ATP + H2O = L-asparaginyl-tRNA(Asn) + L-glutamate + ADP + phosphate + 2 H(+). Its function is as follows. Allows the formation of correctly charged Asn-tRNA(Asn) or Gln-tRNA(Gln) through the transamidation of misacylated Asp-tRNA(Asn) or Glu-tRNA(Gln) in organisms which lack either or both of asparaginyl-tRNA or glutaminyl-tRNA synthetases. The reaction takes place in the presence of glutamine and ATP through an activated phospho-Asp-tRNA(Asn) or phospho-Glu-tRNA(Gln). The polypeptide is Aspartyl/glutamyl-tRNA(Asn/Gln) amidotransferase subunit B (Streptococcus pneumoniae (strain Hungary19A-6)).